A 169-amino-acid polypeptide reads, in one-letter code: Sulfopyruvate decarboxylase subunit alpha (169 aa).

This sequence belongs to the ComD family. As to quaternary structure, heterododecamer composed of 6 subunits alpha and 6 subunits beta.

It catalyses the reaction 3-sulfopyruvate + H(+) = sulfoacetaldehyde + CO2. It functions in the pathway cofactor biosynthesis; coenzyme M biosynthesis; sulfoacetaldehyde from phosphoenolpyruvate and sulfite: step 4/4. Inhibited by oxygen when heated in air at 80 degrees Celsius. The enzyme is reactivated by addition of dithionite. Its function is as follows. Involved in the biosynthesis of the coenzyme M (2-mercaptoethanesulfonic acid). Catalyzes the decarboxylation of sulfopyruvate to sulfoacetaldehyde. The protein is Sulfopyruvate decarboxylase subunit alpha of Methanocaldococcus jannaschii (strain ATCC 43067 / DSM 2661 / JAL-1 / JCM 10045 / NBRC 100440) (Methanococcus jannaschii).